A 308-amino-acid polypeptide reads, in one-letter code: Homoserine O-succinyltransferase (308 aa).

Residue Cys142 is the Acyl-thioester intermediate of the active site. The substrate site is built by Lys163 and Ser192. His235 functions as the Proton acceptor in the catalytic mechanism. Glu237 is an active-site residue. Arg249 is a substrate binding site.

The protein belongs to the MetA family.

It localises to the cytoplasm. The enzyme catalyses L-homoserine + succinyl-CoA = O-succinyl-L-homoserine + CoA. Its pathway is amino-acid biosynthesis; L-methionine biosynthesis via de novo pathway; O-succinyl-L-homoserine from L-homoserine: step 1/1. Functionally, transfers a succinyl group from succinyl-CoA to L-homoserine, forming succinyl-L-homoserine. The chain is Homoserine O-succinyltransferase from Pseudoalteromonas atlantica (strain T6c / ATCC BAA-1087).